A 700-amino-acid polypeptide reads, in one-letter code: Glycine--tRNA ligase beta subunit (700 aa).

This sequence belongs to the class-II aminoacyl-tRNA synthetase family. Tetramer of two alpha and two beta subunits.

The protein resides in the cytoplasm. The catalysed reaction is tRNA(Gly) + glycine + ATP = glycyl-tRNA(Gly) + AMP + diphosphate. The chain is Glycine--tRNA ligase beta subunit from Helicobacter pylori (strain Shi470).